Reading from the N-terminus, the 289-residue chain is Tumor necrosis factor receptor superfamily member 5 (289 aa).

The signal sequence occupies residues 1–19 (MVSLPRLCALWGCLLTAVH). Residues 20–193 (LGQCVTCSDK…VICGLKSRMR (174 aa)) are Extracellular-facing. TNFR-Cys repeat units follow at residues 25–60 (TCSDKQYLHDGQCCDLCQPGSRLTSHCTALEKTQCH), 61–103 (PCDS…DTVC), 104–144 (TCKE…TVCH), and 145–187 (PCPV…VICG). 8 disulfides stabilise this stretch: Cys26/Cys37, Cys38/Cys51, Cys41/Cys59, Cys62/Cys77, Cys83/Cys103, Cys105/Cys119, Cys111/Cys116, and Cys125/Cys143. Asn153 is a glycosylation site (N-linked (GlcNAc...) asparagine). A helical transmembrane segment spans residues 194–215 (ALLVIPVVMGILITIFGVFLYI). Residues 216 to 289 (KKVVKKPKDN…TDSIALRPLV (74 aa)) are Cytoplasmic-facing. Positions 228–251 (LPPAARRQDPQEMEDYPGHNTAAP) are disordered.

In terms of assembly, monomer and homodimer. Interacts with TRAF1, TRAF2 and TRAF6. Interacts with TRAF3 and TRAF5. Interacts with TRAF6 and MAP3K8; the interaction is required for ERK activation.

It localises to the cell membrane. The protein resides in the secreted. Functionally, receptor for TNFSF5/CD40LG. Transduces TRAF6- and MAP3K8-mediated signals that activate ERK in macrophages and B cells, leading to induction of immunoglobulin secretion. The polypeptide is Tumor necrosis factor receptor superfamily member 5 (Cd40) (Mus musculus (Mouse)).